A 143-amino-acid chain; its full sequence is Large ribosomal subunit protein uL13c (143 aa).

It belongs to the universal ribosomal protein uL13 family. Part of the 50S ribosomal subunit.

The protein resides in the plastid. It is found in the chloroplast. The sequence is that of Large ribosomal subunit protein uL13c from Gracilaria tenuistipitata var. liui (Red alga).